Reading from the N-terminus, the 295-residue chain is UTP--glucose-1-phosphate uridylyltransferase (295 aa).

Belongs to the UDPGP type 2 family.

The catalysed reaction is alpha-D-glucose 1-phosphate + UTP + H(+) = UDP-alpha-D-glucose + diphosphate. In terms of biological role, may play a role in stationary phase survival. The chain is UTP--glucose-1-phosphate uridylyltransferase (galU) from Haemophilus ducreyi (strain 35000HP / ATCC 700724).